We begin with the raw amino-acid sequence, 261 residues long: Global transcriptional regulator CodY (261 aa).

The interval 1–159 is GAF domain; it reads MANLLSKTRR…SSTVVGIQLL (159 aa). The segment at residues 207-226 is a DNA-binding region (H-T-H motif); that stretch reads ASVIADRIGITRSVIVNALR.

This sequence belongs to the CodY family.

It is found in the cytoplasm. DNA-binding global transcriptional regulator which is involved in the adaptive response to starvation and acts by directly or indirectly controlling the expression of numerous genes in response to nutrient availability. During rapid exponential growth, CodY is highly active and represses genes whose products allow adaptation to nutrient depletion. The protein is Global transcriptional regulator CodY of Streptococcus mutans serotype c (strain ATCC 700610 / UA159).